We begin with the raw amino-acid sequence, 172 residues long: Small ribosomal subunit protein uS5 (172 aa).

In terms of domain architecture, S5 DRBM spans tyrosine 15–valine 78.

Belongs to the universal ribosomal protein uS5 family. Part of the 30S ribosomal subunit. Contacts proteins S4 and S8.

Its function is as follows. With S4 and S12 plays an important role in translational accuracy. In terms of biological role, located at the back of the 30S subunit body where it stabilizes the conformation of the head with respect to the body. In Ruthia magnifica subsp. Calyptogena magnifica, this protein is Small ribosomal subunit protein uS5.